A 196-amino-acid chain; its full sequence is UPF0056 membrane protein BU449 (196 aa).

Transmembrane regions (helical) follow at residues 8-28, 45-65, 71-91, 105-125, 134-154, and 174-194; these read TILLVLIMDPLGNLPIFMTIL, IIALIVMLLFLFVGEKILIIL, TVSISGGVILFLIAIKMIFPS, FLVPLAIPLVAGPSLLATLML, MFYLVGSLLISWFFTVIILLS, and MGLVLIMLSTQMFLDGIRAWF.

Belongs to the UPF0056 (MarC) family.

Its subcellular location is the cell membrane. The protein is UPF0056 membrane protein BU449 of Buchnera aphidicola subsp. Acyrthosiphon pisum (strain APS) (Acyrthosiphon pisum symbiotic bacterium).